The following is a 567-amino-acid chain: MNVQKSNNAEETITPFSEESSLLNSNSYIPATFVDPTTIPQTSTEDIDIHGFNSIFDIPNLAWIEVSLLLNVFLAGFDGTVTASAYTTIGEEFHAANLASWITTSYLITSTTFQPLYGSFSDVLGRRVCLFMASGLFCLGCLWCYFSSGMVSLIFARSFMGIGGGGLITLSTIINSDIIPTRNRGLFQAFQNLLLGFGAICGASFGGVLSEVFSWRLCFLVQVPFSVLSIAVGFFFVKNQSGYSRFHHYCVLFKKIDILGGLLLVSGLTSLLLVLTFGSSRSIQTYRPSQLLLLLGILCIVAFVYVESITEAAPIIPLKLLKGLYSSLVLTTGFLIGLAGYAYLFTLPLFFQLVLGDSPSKAGLRLALPSLSTPIGGLICGILMHRNFRVGKLLFSGVFLMSLGYFLSLFIHPGISPIVLGIFLIPANVGQGIGFPSSLFSFIFAFPQNSHATSTSTLYLIRSIGSLFGVGGLSAVIQLTLRKKMLADLTKFTDLDSKSIQKIIHDVSKSISALYELPEAIQEIVLSDYTFSIRKAQQFTTICCVLALGLCILKDTIKPRTPSGFRY.

12 helical membrane-spanning segments follow: residues 136-156 (LFCLGCLWCYFSSGMVSLIFA), 159-179 (FMGIGGGGLITLSTIINSDII), 193-213 (LLLGFGAICGASFGGVLSEVF), 217-237 (LCFLVQVPFSVLSIAVGFFFV), 258-278 (ILGGLLLVSGLTSLLLVLTFG), 291-311 (LLLLLGILCIVAFVYVESITE), 334-354 (FLIGLAGYAYLFTLPLFFQLV), 364-384 (LRLALPSLSTPIGGLICGILM), 393-415 (LLFSGVFLMSLGYFLSLFIHPGI), 426-446 (PANVGQGIGFPSSLFSFIFAF), 457-477 (TLYLIRSIGSLFGVGGLSAVI), and 536-553 (AQQFTTICCVLALGLCIL).

Belongs to the major facilitator superfamily.

The protein localises to the membrane. This is an uncharacterized protein from Schizosaccharomyces pombe (strain 972 / ATCC 24843) (Fission yeast).